A 309-amino-acid polypeptide reads, in one-letter code: Olfactory receptor 5AK2 (309 aa).

Residues 1–25 (MTLGNSTEVTEFYLLGFGAQHEFWC) lie on the Extracellular side of the membrane. The N-linked (GlcNAc...) asparagine glycan is linked to Asn-5. The helical transmembrane segment at 26–46 (ILFIVFLLIYVTSIMGNSGII) threads the bilayer. Residues 47–54 (LLINTDSR) are Cytoplasmic-facing. The chain crosses the membrane as a helical span at residues 55-75 (FQTLTYFFLQHLAFVDICYTS). At 76–99 (AITPKMLQSFTEEKNLMLFQGCVI) the chain is on the extracellular side. Cysteines 97 and 189 form a disulfide. The helical transmembrane segment at 100–120 (QFLVYATFATSDCYLLAMMAV) threads the bilayer. Topologically, residues 121–133 (DPYVAICKPLHYT) are cytoplasmic. The chain crosses the membrane as a helical span at residues 134–154 (VIMSRTVCIRLVAGSYIMGSI). Asn-155 is a glycosylation site (N-linked (GlcNAc...) asparagine). Residues 155–196 (NASVQTGFTCSLSFCKSNSINHFFCDVPPILALSCSNVDINI) lie on the Extracellular side of the membrane. A helical transmembrane segment spans residues 197 to 217 (MLLVVFVGSNLIFTGLVVIFS). The Cytoplasmic segment spans residues 218 to 237 (YIYIMATILKMSSSAGRKKS). The chain crosses the membrane as a helical span at residues 238–258 (FSTCASHLTAVTIFYGTLSYM). Topologically, residues 259-271 (YLQSHSNNSQENM) are extracellular. An N-linked (GlcNAc...) asparagine glycan is attached at Asn-265. The chain crosses the membrane as a helical span at residues 272–292 (KVAFIFYGTVIPMLNPLIYSL). The Cytoplasmic portion of the chain corresponds to 293-309 (RNKEVKEALKVIGKKLF).

Belongs to the G-protein coupled receptor 1 family.

Its subcellular location is the cell membrane. In terms of biological role, odorant receptor. The protein is Olfactory receptor 5AK2 (OR5AK2) of Homo sapiens (Human).